Here is a 508-residue protein sequence, read N- to C-terminus: WD repeat-containing protein DDB_G0290555 (508 aa).

WD repeat units lie at residues 32–74 (TSEL…LIGE), 159–198 (NVAT…KTYS), 252–292 (FSKH…QVGS), and 295–334 (DSAG…MLHK). The interval 368–508 (ENKNRINNDD…KKFAGLKKRK (141 aa)) is disordered. Positions 399–435 (MDSDDDIEDGDDNDVEFPMEADSDDSDFDLGNSDDDN) are enriched in acidic residues. Basic and acidic residues predominate over residues 436-446 (ISVKKENKGDS). Acidic residues predominate over residues 447–456 (DDSDDDSDED). The segment covering 471-493 (NNNNNNNKGKNNKGKNNSSTKKT) has biased composition (low complexity). Basic residues predominate over residues 497–508 (LKKKFAGLKKRK).

The chain is WD repeat-containing protein DDB_G0290555 from Dictyostelium discoideum (Social amoeba).